The chain runs to 841 residues: Nitrogen permease regulator 3 (841 aa).

Residues 1-23 form the signal peptide; it reads MSSIARPPDPCLVAIILIVRSRA. Disordered regions lie at residues 30–172, 221–301, and 656–698; these read HYPP…RPPW, RKQR…SSVD, and EAQK…PGRY. The span at 43–52 shows a compositional bias: basic residues; that stretch reads PVRKERRTSR. Low complexity-rich tracts occupy residues 61 to 73 and 84 to 106; these read SNES…SGSS and QLQS…RRSS. The segment covering 221–231 has biased composition (basic residues); it reads RKQRRKKKKKW. Basic and acidic residues predominate over residues 232–245; sequence RAEWEGGELGHNEN. Acidic residues predominate over residues 246-256; the sequence is AEDAPDDEDGD. Residues 257–267 are compositionally biased toward gly residues; it reads AGGNASGGGGL. A compositionally biased stretch (low complexity) spans 288–299; that stretch reads GSGSSSKAARSS. Over residues 665-674 the composition is skewed to acidic residues; sequence NGNEADENDD. The span at 675–689 shows a compositional bias: low complexity; sequence ASSSSSSSLASQGSG.

The protein belongs to the NPR3 family.

Mediates inactivation of the TORC1 complex in response to amino acid starvation. Required for meiotic nuclear division. This is Nitrogen permease regulator 3 (npr3) from Neosartorya fischeri (strain ATCC 1020 / DSM 3700 / CBS 544.65 / FGSC A1164 / JCM 1740 / NRRL 181 / WB 181) (Aspergillus fischerianus).